Reading from the N-terminus, the 993-residue chain is Isoleucine--tRNA ligase, mitochondrial (993 aa).

The transit peptide at 1–29 directs the protein to the mitochondrion; it reads SLWGTPRLPCSPGWQGATKRLLVRSVSGA. Residue lysine 55 is modified to N6-acetyllysine; alternate. Position 55 is an N6-succinyllysine; alternate (lysine 55). The 'HIGH' region motif lies at 97–107; that stretch reads PYANGDPHVGH. Lysine 170 carries the post-translational modification N6-acetyllysine. At lysine 175 the chain carries N6-succinyllysine. Lysine 214 bears the N6-acetyllysine mark. Lysine 222 carries the N6-acetyllysine; alternate modification. Lysine 222 bears the N6-succinyllysine; alternate mark. An N6-succinyllysine mark is found at lysine 460 and lysine 481. Lysine 645 and lysine 648 together coordinate ATP. Residues 645-649 carry the 'KMSKS' region motif; that stretch reads KMSKS. Residue lysine 706 is modified to N6-acetyllysine. 2 positions are modified to N6-acetyllysine; alternate: lysine 756 and lysine 762. Lysine 756 and lysine 762 each carry N6-succinyllysine; alternate.

The protein belongs to the class-I aminoacyl-tRNA synthetase family.

The protein localises to the mitochondrion matrix. The enzyme catalyses tRNA(Ile) + L-isoleucine + ATP = L-isoleucyl-tRNA(Ile) + AMP + diphosphate. Aminoacyl-tRNA synthetase that catalyzes the specific attachment of isoleucine to its cognate tRNA (tRNA(Ile)). The protein is Isoleucine--tRNA ligase, mitochondrial (IARS2) of Macaca fascicularis (Crab-eating macaque).